The primary structure comprises 350 residues: Nicotinate-nucleotide--dimethylbenzimidazole phosphoribosyltransferase (350 aa).

Glu-317 serves as the catalytic Proton acceptor.

It belongs to the CobT family.

The catalysed reaction is 5,6-dimethylbenzimidazole + nicotinate beta-D-ribonucleotide = alpha-ribazole 5'-phosphate + nicotinate + H(+). The protein operates within nucleoside biosynthesis; alpha-ribazole biosynthesis; alpha-ribazole from 5,6-dimethylbenzimidazole: step 1/2. Catalyzes the synthesis of alpha-ribazole-5'-phosphate from nicotinate mononucleotide (NAMN) and 5,6-dimethylbenzimidazole (DMB). The protein is Nicotinate-nucleotide--dimethylbenzimidazole phosphoribosyltransferase of Shewanella putrefaciens (strain CN-32 / ATCC BAA-453).